Reading from the N-terminus, the 218-residue chain is Oxidoreductase claN (218 aa).

Lys-38, Asp-57, and Asn-82 together coordinate NADP(+). The active-site Proton donor is Ser-134. Positions 148, 152, and 183 each coordinate NADP(+). The active-site Proton acceptor is the Tyr-148. Lys-152 acts as the Lowers pKa of active site Tyr in catalysis.

Belongs to the short-chain dehydrogenases/reductases (SDR) family.

It functions in the pathway pigment biosynthesis. In terms of biological role, oxidoreductase; part of the gene cluster that mediates the biosynthesis of the bianthraquinone cladofulvin, a conidial pigment not required for virulence but that plays a role in fitness and resistance to environmental stresses including UV light and low-temperature stress. The pathway begins with the synthesis of atrochrysone thioester by the polyketide synthase (PKS) claG. The atrochrysone carboxyl ACP thioesterase claF then breaks the thioester bond and releases the atrochrysone carboxylic acid from claG. This compound is decarboxylated by claH to yield emodin, which is further converted to chrysophanol hydroquinone by the reductase claC and the dehydratase claB. The cytochrome P450 monooxygenase claM then catalyzes the dimerization of nataloe-emodin to cladofulvin. This Passalora fulva (Tomato leaf mold) protein is Oxidoreductase claN.